The primary structure comprises 63 residues: DNA-directed RNA polymerase 7 kDa subunit (63 aa).

The protein belongs to the poxviridae DNA-directed RNA polymerase 7 kDa subunit family. As to quaternary structure, the DNA-dependent RNA polymerase (vRNAP) consists of eight subunits encoded by early viral genes and termed according to their apparent molecular masses Rpo147, Rpo132, Rpo35, Rpo30, Rpo22, Rpo19, Rpo18, and Rpo7. The same holoenzyme, with the addition of the transcription-specificity factor RAP94, is used for early gene expression.

It localises to the virion. The catalysed reaction is RNA(n) + a ribonucleoside 5'-triphosphate = RNA(n+1) + diphosphate. Its function is as follows. Part of the DNA-dependent RNA polymerase which catalyzes the transcription of viral DNA into RNA using the four ribonucleoside triphosphates as substrates. Responsible for the transcription of early, intermediate and late genes. DNA-dependent RNA polymerase associates with the early transcription factor (ETF), itself composed of OPG118 and OPG134, thereby allowing the early genes transcription. Late transcription, and probably also intermediate transcription, require newly synthesized RNA polymerase. This chain is DNA-directed RNA polymerase 7 kDa subunit (OPG090), found in Homo sapiens (Human).